The following is a 334-amino-acid chain: Ornithine carbamoyltransferase, catabolic (334 aa).

Residues serine 57–threonine 60, glutamine 84, arginine 108, and histidine 135–glutamine 138 contribute to the carbamoyl phosphate site. L-ornithine is bound by residues asparagine 168, aspartate 232, and serine 236–methionine 237. Residues cysteine 274–leucine 275 and arginine 320 contribute to the carbamoyl phosphate site.

This sequence belongs to the aspartate/ornithine carbamoyltransferase superfamily. OTCase family.

The protein resides in the cytoplasm. The enzyme catalyses carbamoyl phosphate + L-ornithine = L-citrulline + phosphate + H(+). It functions in the pathway amino-acid degradation; L-arginine degradation via ADI pathway; carbamoyl phosphate from L-arginine: step 2/2. Functionally, reversibly catalyzes the transfer of the carbamoyl group from carbamoyl phosphate (CP) to the N(epsilon) atom of ornithine (ORN) to produce L-citrulline. The chain is Ornithine carbamoyltransferase, catabolic (arcB) from Rhizobium meliloti (strain 1021) (Ensifer meliloti).